The following is an 85-amino-acid chain: MLAGMPSLSHEEQQEAVERIHQFMSEGMSSGEAIALVAAEIRERHQNDPQAMAIFEDTDFDEHDESDYRRDNEQDADEIEDPYEG.

Disordered regions lie at residues 1 to 22 and 57 to 85; these read MLAG…RIHQ and DTDF…PYEG. Positions 9 to 21 are enriched in basic and acidic residues; it reads SHEEQQEAVERIH. A compositionally biased stretch (acidic residues) spans 74–85; sequence QDADEIEDPYEG.

Belongs to the UPF0181 family.

This is UPF0181 protein YE1782 from Yersinia enterocolitica serotype O:8 / biotype 1B (strain NCTC 13174 / 8081).